Consider the following 196-residue polypeptide: Probable peptidyl-prolyl cis-trans isomerase (196 aa).

The N-terminal stretch at 1–26 is a signal peptide; that stretch reads MSFIRSALAAAAFVALSIGAVQTASA. The PPIase cyclophilin-type domain occupies 29–194; that stretch reads PENTVILKLK…KIIKATIEAD (166 aa).

This sequence belongs to the cyclophilin-type PPIase family.

The protein localises to the periplasm. It catalyses the reaction [protein]-peptidylproline (omega=180) = [protein]-peptidylproline (omega=0). Its function is as follows. PPIases accelerate the folding of proteins. It catalyzes the cis-trans isomerization of proline imidic peptide bonds in oligopeptides. The polypeptide is Probable peptidyl-prolyl cis-trans isomerase (ppi) (Brucella melitensis biotype 1 (strain ATCC 23456 / CCUG 17765 / NCTC 10094 / 16M)).